A 121-amino-acid polypeptide reads, in one-letter code: Large ribosomal subunit protein uL18 (121 aa).

Belongs to the universal ribosomal protein uL18 family. In terms of assembly, part of the 50S ribosomal subunit; part of the 5S rRNA/L5/L18/L25 subcomplex. Contacts the 5S and 23S rRNAs.

This is one of the proteins that bind and probably mediate the attachment of the 5S RNA into the large ribosomal subunit, where it forms part of the central protuberance. The protein is Large ribosomal subunit protein uL18 of Burkholderia mallei (strain NCTC 10247).